Here is a 325-residue protein sequence, read N- to C-terminus: Cytochrome f (325 aa).

Positions 1-40 (MSKINLSTMWSSFIKKIAKTILVAIACISLFLTSSPAANA) are cleaved as a signal peptide. Heme contacts are provided by Y41, C62, C65, and H66. Residues 291–311 (VKWLMAFFALVMLAQIMLVLK) form a helical membrane-spanning segment.

Belongs to the cytochrome f family. In terms of assembly, the 4 large subunits of the cytochrome b6-f complex are cytochrome b6, subunit IV (17 kDa polypeptide, PetD), cytochrome f and the Rieske protein, while the 4 small subunits are PetG, PetL, PetM and PetN. The complex functions as a dimer. The cofactor is heme.

It localises to the cellular thylakoid membrane. Its function is as follows. Component of the cytochrome b6-f complex, which mediates electron transfer between photosystem II (PSII) and photosystem I (PSI), cyclic electron flow around PSI, and state transitions. The polypeptide is Cytochrome f (Trichodesmium erythraeum (strain IMS101)).